The chain runs to 143 residues: Nucleoside diphosphate kinase (143 aa).

The ATP site is built by Lys11, Phe59, Arg87, Thr93, Arg104, and Asn114. Catalysis depends on His117, which acts as the Pros-phosphohistidine intermediate.

Belongs to the NDK family. Homotetramer. Requires Mg(2+) as cofactor.

It localises to the cytoplasm. The enzyme catalyses a 2'-deoxyribonucleoside 5'-diphosphate + ATP = a 2'-deoxyribonucleoside 5'-triphosphate + ADP. It catalyses the reaction a ribonucleoside 5'-diphosphate + ATP = a ribonucleoside 5'-triphosphate + ADP. Major role in the synthesis of nucleoside triphosphates other than ATP. The ATP gamma phosphate is transferred to the NDP beta phosphate via a ping-pong mechanism, using a phosphorylated active-site intermediate. The chain is Nucleoside diphosphate kinase from Klebsiella pneumoniae (strain 342).